The sequence spans 187 residues: ECF RNA polymerase sigma factor SigW (187 aa).

The tract at residues 3–95 (MMIKKRIKQV…RKKKPDYYLD (93 aa)) is sigma-70 factor domain-2. The short motif at 47–50 (DIAQ) is the Polymerase core binding element. The interval 125-187 (ELSNTIQQKI…EALRKQLRDL (63 aa)) is sigma-70 factor domain-4. Residues 166–184 (VGTVKTRIHRGREALRKQL) constitute a DNA-binding region (H-T-H motif).

This sequence belongs to the sigma-70 factor family. ECF subfamily. As to quaternary structure, interacts transiently with the RNA polymerase catalytic core formed by RpoA, RpoB, RpoC and RpoZ (2 alpha, 1 beta, 1 beta' and 1 omega subunit) to form the RNA polymerase holoenzyme that can initiate transcription. Forms a heterodimer with cognate anti-sigma factor RsiW, which prevents it from binding to the -10 and -35 promoter elements.

Its activity is regulated as follows. Extracytoplasmic function (ECF) sigma factors are held in an inactive form by a cognate anti-sigma factor (RsiW for this protein) until released by regulated membrane proteolysis (RIP). RIP occurs when an extracytoplasmic signal (envelope stress) triggers a concerted proteolytic cascade to transmit information and elicit cellular responses. The anti-sigma factor RsiW is a membrane protein, binding sigma-W in the cytoplasm. RsiW is first cut extracytoplasmically (site-1 protease, S1P, by PrsW), then within the membrane itself (site-2 protease, S2P, by RasP), while cytoplasmic proteases (predominantly ClpX-ClpP) finish degrading the regulatory protein, liberating sigma-W. Sigma factors are initiation factors that promote the attachment of RNA polymerase (RNAP) to specific initiation sites and are then released. Sigma-W controls genes involved in response to cell envelope stress such as antimicrobial peptides, alkaline pH, transport processes and detoxification. This chain is ECF RNA polymerase sigma factor SigW (sigW), found in Bacillus subtilis (strain 168).